The chain runs to 150 residues: 3-dehydroquinate dehydratase (150 aa).

Residue tyrosine 26 is the Proton acceptor of the active site. Residues asparagine 77, histidine 83, and aspartate 90 each coordinate substrate. Histidine 103 serves as the catalytic Proton donor. Substrate-binding positions include 104–105 (LS) and arginine 114.

The protein belongs to the type-II 3-dehydroquinase family. As to quaternary structure, homododecamer.

The catalysed reaction is 3-dehydroquinate = 3-dehydroshikimate + H2O. It functions in the pathway metabolic intermediate biosynthesis; chorismate biosynthesis; chorismate from D-erythrose 4-phosphate and phosphoenolpyruvate: step 3/7. Catalyzes a trans-dehydration via an enolate intermediate. The protein is 3-dehydroquinate dehydratase of Yersinia pseudotuberculosis serotype O:1b (strain IP 31758).